Here is a 494-residue protein sequence, read N- to C-terminus: Glucose-6-phosphate exchanger SLC37A2 (494 aa).

Residues 20-37 traverse the membrane as a helical segment; that stretch reads YRFSILFLTFVFYTSYHL. Residues Asn-52, Asn-63, and Asn-67 are each glycosylated (N-linked (GlcNAc...) asparagine). The next 11 membrane-spanning stretches (helical) occupy residues 85–105, 116–136, 146–166, 187–207, 208–228, 295–315, 327–347, 355–375, 384–404, 427–447, and 455–475; these read FGVL…FSGI, LSTG…GFYW, LVQA…VACV, SVGN…AWGL, SFIV…LFLV, LCLL…PLYI, GDLS…AGLV, ASTC…YNKI, VGML…ITTA, AIID…AGLI, and VFYM…RLVY.

This sequence belongs to the major facilitator superfamily. Organophosphate:Pi antiporter (OPA) (TC 2.A.1.4) family.

The protein localises to the endoplasmic reticulum membrane. The catalysed reaction is D-glucose 6-phosphate(in) + phosphate(out) = D-glucose 6-phosphate(out) + phosphate(in). Inorganic phosphate and glucose-6-phosphate antiporter. May transport cytoplasmic glucose-6-phosphate into the lumen of the endoplasmic reticulum and translocate inorganic phosphate into the opposite direction. This Danio rerio (Zebrafish) protein is Glucose-6-phosphate exchanger SLC37A2.